We begin with the raw amino-acid sequence, 217 residues long: Probable GTP-binding protein EngB (217 aa).

In terms of domain architecture, EngB-type G spans 27 to 201; sequence GGVEIAFAGR…AQTLSGWYLA (175 aa). GTP is bound by residues 35–42, 62–66, 80–83, 147–150, and 180–182; these read GRSNAGKS, GRTQL, DLPG, TKAD, and FSS. Mg(2+) contacts are provided by S42 and T64.

It belongs to the TRAFAC class TrmE-Era-EngA-EngB-Septin-like GTPase superfamily. EngB GTPase family. Mg(2+) serves as cofactor.

In terms of biological role, necessary for normal cell division and for the maintenance of normal septation. This is Probable GTP-binding protein EngB from Aeromonas salmonicida (strain A449).